We begin with the raw amino-acid sequence, 357 residues long: AA9 family lytic polysaccharide monooxygenase B (357 aa).

The signal sequence occupies residues Met-1–Ser-18. 2 residues coordinate Cu(2+): His-19 and His-101. The segment at His-19–Ala-234 is catalytic. Cys-61 and Cys-182 are oxidised to a cystine. His-168 and Gln-177 together coordinate O2. Tyr-179 is a Cu(2+) binding site. A ser/Thr-rich linker region spans residues Ser-235–Thr-318. The interval Ser-292–Gly-317 is disordered. A compositionally biased stretch (low complexity) spans Pro-295–Thr-313. In terms of domain architecture, CBM1 spans Gly-319–Val-355.

The protein belongs to the polysaccharide monooxygenase AA9 family. Cu(2+) serves as cofactor.

The protein localises to the secreted. The catalysed reaction is [(1-&gt;4)-beta-D-glucosyl]n+m + reduced acceptor + O2 = 4-dehydro-beta-D-glucosyl-[(1-&gt;4)-beta-D-glucosyl]n-1 + [(1-&gt;4)-beta-D-glucosyl]m + acceptor + H2O.. Functionally, lytic polysaccharide monooxygenase (LPMO) that depolymerizes crystalline and amorphous polysaccharides via the oxidation of scissile alpha- or beta-(1-4)-glycosidic bonds, yielding C4 oxidation products. Catalysis by LPMOs requires the reduction of the active-site copper from Cu(II) to Cu(I) by a reducing agent and H(2)O(2) or O(2) as a cosubstrate. Active on carboxymethylcellulose (CMC), hydroxyethylcellulose (HEC) and beta-glucan. Also active on soluble cellohexaose, a property that is restricted to only a few characterized LPMOs. This Emericella nidulans (strain FGSC A4 / ATCC 38163 / CBS 112.46 / NRRL 194 / M139) (Aspergillus nidulans) protein is AA9 family lytic polysaccharide monooxygenase B.